We begin with the raw amino-acid sequence, 523 residues long: MKVWNARNDHLTINQWATRIDEILEAPDGGEVIYNVDENDPREYDAIFIGGGAAGRFGSAYLRAMGGRQLIVDRWPFLGGSCPHNACVPHHLFSDCAAELMLARTFSGQYWFPDMTEKVVGIKEVVDLFRAGRNGPHGIMNFQSKEQLNLEYILNCPAKVIDNHTVEAAGKVFKAKNLILAVGAGPGTLDVPGVNAKGVFDHATLVEELDYEPGSTVVVVGGSKTAVEYGCFFNATGRRTVMLVRTEPLKLIKDNETRAYVLDRMKEQGMEIISGSNVTRIEEDANGRVQAVVAMTPNGEMRIETDFVFLGLGEQPRSAELAKILGLDLGPKGEVLVNEYLQTSVPNVYAVGDLIGGPMEMFKARKSGCYAARNVMGEKISYTPKNYPDFLHTHYEVSFLGMGEEEARAAGHEIVTIKMPPDTENGLNVALPASDRTMLYAFGKGTAHMSGFQKIVIDAKTRKVLGAHHVGYGAKDAFQYLNVLIKQGLTVDELGDMDELFLNPTHFIQLSRLRAGSKNLVSL.

53–54 (AA) serves as a coordination point for FAD. Residue Arg-56 coordinates 2-oxopropyl-coenzyme M. Ser-81 contacts FAD. Cys-82 contacts 2-oxopropyl-coenzyme M. Cys-82 and Cys-87 are joined by a disulfide. FAD is bound at residue Ala-158. NADP(+) is bound by residues 222–225 (GSKT) and 245–246 (RT). Asp-353 is a binding site for FAD. Glu-360 serves as a coordination point for NADP(+). Residue Met-361 participates in FAD binding. Arg-365 lines the 2-oxopropyl-coenzyme M pocket. Residue Phe-501 coordinates FAD.

This sequence belongs to the class-I pyridine nucleotide-disulfide oxidoreductase family. Homodimer. Component II of the aliphatic epoxide carboxylation complex together with components I, III and IV. FAD serves as cofactor.

It carries out the reaction coenzyme M + acetoacetate + NADP(+) = 2-oxopropyl-coenzyme M + CO2 + NADPH. Its pathway is alkene metabolism; propylene degradation. Its activity is regulated as follows. Inhibited (at 40%) by the coenzyme M analog 2-bromoethanesulfonate (BES). BES is a time-dependent inactivator of dithiothreitol-reduced 2-KPCC, where the redox active cysteines are in the free thiol forms. BES does not inactivate air-oxidized 2-KPCC, where the redox active cysteine pair is in the disulfide form. BES specifically alkylates the interchange thiol that facilitates thioether bond cleavage and enolacetone formation during catalysis. In terms of biological role, involved in aliphatic epoxide carboxylation. Catalyzes the reductive cleavage of the thioether bond of 2-oxopropyl-coenzyme M (2-KPC), and the subsequent carboxylation of the ketopropyl cleavage product, yielding the products acetoacetate and free coenzyme M. In Xanthobacter autotrophicus (strain ATCC BAA-1158 / Py2), this protein is 2-oxopropyl-CoM reductase, carboxylating.